The sequence spans 223 residues: Dephospho-CoA kinase (223 aa).

Residues 22–223 enclose the DPCK domain; the sequence is LIGLSGPSCS…LLQEVKKRGF (202 aa). Position 30-35 (30-35) interacts with ATP; it reads CSGKNT.

Belongs to the CoaE family.

The protein localises to the cytoplasm. The catalysed reaction is 3'-dephospho-CoA + ATP = ADP + CoA + H(+). It functions in the pathway cofactor biosynthesis; coenzyme A biosynthesis; CoA from (R)-pantothenate: step 5/5. Catalyzes the phosphorylation of the 3'-hydroxyl group of dephosphocoenzyme A to form coenzyme A. This Treponema denticola (strain ATCC 35405 / DSM 14222 / CIP 103919 / JCM 8153 / KCTC 15104) protein is Dephospho-CoA kinase.